Here is a 305-residue protein sequence, read N- to C-terminus: Plant-type L-asparaginase (305 aa).

T175 acts as the Nucleophile in catalysis. Residues 202–205 (RVGD) and 224–227 (TGLG) each bind substrate.

It belongs to the Ntn-hydrolase family. As to quaternary structure, heterotetramer of two alpha and two beta chains arranged as a dimer of alpha/beta heterodimers. Autocleaved. Generates the alpha and beta subunits. The N-terminal residue of the beta subunit is thought to be responsible for the nucleophile hydrolase activity.

It catalyses the reaction L-asparagine + H2O = L-aspartate + NH4(+). Functionally, catalyzes the hydrolysis of L-asparagine into L-aspartate and ammonia. The polypeptide is Plant-type L-asparaginase (Pyrococcus horikoshii (strain ATCC 700860 / DSM 12428 / JCM 9974 / NBRC 100139 / OT-3)).